A 317-amino-acid polypeptide reads, in one-letter code: uncharacterized protein (317 aa).

The Cytoplasmic portion of the chain corresponds to 1 to 13; it reads MKRVTGVFLTLLR. Residues 14–34 form a helical membrane-spanning segment; the sequence is FSQFASSVLVMSLLAYAIHAY. Residues 35-49 are Extracellular-facing; it reads GNRGNKKTNFTLATG. N-linked (GlcNAc...) asparagine glycosylation is present at Asn43. Residues 50–70 traverse the membrane as a helical segment; that stretch reads VISVFYLIALGILCLALPTLI. Tyr71 is a topological domain (cytoplasmic). Residues 72–92 traverse the membrane as a helical segment; it reads IGMYFCAELIVCMLWLAAFVV. Over 93-133 the chain is Extracellular; sequence LAKAQGERSCSNTNADGLYYNPYSGQYTADSHRRACNSSQA. N-linked (GlcNAc...) asparagine glycosylation occurs at Asn129. A helical transmembrane segment spans residues 134–154; it reads AIAFSGLCFVLFLISVILLGI. Residues 155 to 317 are Cytoplasmic-facing; the sequence is NVLTPIRKRY…EPNRNVNQMP (163 aa). The interval 204–317 is disordered; that stretch reads RTGDVEAGAG…EPNRNVNQMP (114 aa). Residues 239–250 show a composition bias toward low complexity; that stretch reads TTTTNTRYTTTT. The segment covering 256–282 has biased composition (polar residues); the sequence is RYTTNDRNPGSANVANSAVDQHAYSTD. The span at 284–295 shows a compositional bias: basic and acidic residues; the sequence is SGDRSYQEKVTE. Positions 302 to 317 are enriched in polar residues; the sequence is MSGSTAEPNRNVNQMP.

The protein resides in the membrane. This is an uncharacterized protein from Saccharomyces cerevisiae (strain ATCC 204508 / S288c) (Baker's yeast).